The chain runs to 294 residues: 4-hydroxy-tetrahydrodipicolinate synthase (294 aa).

Thr45 contacts pyruvate. Tyr133 (proton donor/acceptor) is an active-site residue. Lys161 (schiff-base intermediate with substrate) is an active-site residue. Residue Ile203 participates in pyruvate binding.

Belongs to the DapA family. In terms of assembly, homotetramer; dimer of dimers.

Its subcellular location is the cytoplasm. The catalysed reaction is L-aspartate 4-semialdehyde + pyruvate = (2S,4S)-4-hydroxy-2,3,4,5-tetrahydrodipicolinate + H2O + H(+). The protein operates within amino-acid biosynthesis; L-lysine biosynthesis via DAP pathway; (S)-tetrahydrodipicolinate from L-aspartate: step 3/4. Its function is as follows. Catalyzes the condensation of (S)-aspartate-beta-semialdehyde [(S)-ASA] and pyruvate to 4-hydroxy-tetrahydrodipicolinate (HTPA). The polypeptide is 4-hydroxy-tetrahydrodipicolinate synthase (Shewanella sp. (strain MR-7)).